The chain runs to 340 residues: Phosphoribosylformylglycinamidine cyclo-ligase (340 aa).

It belongs to the AIR synthase family.

The protein resides in the cytoplasm. It carries out the reaction 2-formamido-N(1)-(5-O-phospho-beta-D-ribosyl)acetamidine + ATP = 5-amino-1-(5-phospho-beta-D-ribosyl)imidazole + ADP + phosphate + H(+). Its pathway is purine metabolism; IMP biosynthesis via de novo pathway; 5-amino-1-(5-phospho-D-ribosyl)imidazole from N(2)-formyl-N(1)-(5-phospho-D-ribosyl)glycinamide: step 2/2. In Streptococcus pyogenes serotype M6 (strain ATCC BAA-946 / MGAS10394), this protein is Phosphoribosylformylglycinamidine cyclo-ligase.